Here is a 250-residue protein sequence, read N- to C-terminus: Kv channel-interacting protein 4 (250 aa).

The tract at residues 2-44 is KIS; sequence NVRRVESISAQLEEASSTGGFLYAQNSTKRSIKERLMKLLPCS. Ser-17 and Ser-56 each carry phosphoserine. An EF-hand 1; degenerate domain is found at 61–117; it reads LEMATVRHRPEALELLEAQSKFTKKELQILYRGFKNECPSGVVNEETFKEIYSQFFP. EF-hand domains follow at residues 120 to 155, 156 to 191, and 204 to 239; these read DSTT…LLRG, TVQE…IYDM, and APRQ…DENI. Ca(2+) is bound by residues Asp-133, Asp-135, Asn-137, Asp-144, Asp-169, Asn-171, Asp-173, Tyr-175, Glu-180, Asp-217, Asn-219, Asp-221, and Glu-228. The segment at 237 to 250 is interaction with KCND2; sequence ENIMRSMQLFENVI.

It belongs to the recoverin family. As to quaternary structure, component of heteromultimeric potassium channels. Identified in potassium channel complexes containing KCND1, KCND2, KCND3, KCNIP1, KCNIP2, KCNIP3, KCNIP4, DPP6 and DPP10. Interacts with KCND2. Interacts with KCND3. Interacts with the C-terminus of PSEN2 and probably PSEN1.

Its subcellular location is the cell membrane. The protein resides in the cytoplasm. The protein localises to the peroxisome. In terms of biological role, regulatory subunit of Kv4/D (Shal)-type voltage-gated rapidly inactivating A-type potassium channels. Modulates KCND2 channel density, inactivation kinetics and rate of recovery from inactivation in a calcium-dependent and isoform-specific manner. Modulates KCND3/Kv4.3 currents. Isoform 4 does not increase KCND2 expression at the cell membrane. Isoform 4 retains KCND3 in the endoplasmic reticulum and negatively regulates its expression at the cell membrane. The polypeptide is Kv channel-interacting protein 4 (KCNIP4) (Macaca fascicularis (Crab-eating macaque)).